Consider the following 86-residue polypeptide: MAEDMETKIKNYKTAPFDSRFPNQNQTRNCWQNYLDFHRCQKAMTAKGGDISVCEWYQRVYQSLCPTSWVTDWDEQRAEGTFPGKI.

An N-acetylalanine modification is found at Ala2. In terms of domain architecture, CHCH spans Thr27–Trp73. The Cx9C motif motif lies at Cys30–Cys40. 2 disulfide bridges follow: Cys30/Cys65 and Cys40/Cys54. A Cx10C motif motif is present at residues Cys54–Cys65.

Belongs to the cytochrome c oxidase subunit 6B family. As to quaternary structure, component of the cytochrome c oxidase (complex IV, CIV), a multisubunit enzyme composed of 14 subunits. The complex is composed of a catalytic core of 3 subunits MT-CO1, MT-CO2 and MT-CO3, encoded in the mitochondrial DNA, and 11 supernumerary subunits COX4I1 (or COX4I2), COX5A, COX5B, COX6A1 (or COX6A2), COX6B1 (or COX6B2), COX6C, COX7A2 (or COX7A1), COX7B, COX7C, COX8A and NDUFA4, which are encoded in the nuclear genome. The complex exists as a monomer or a dimer and forms supercomplexes (SCs) in the inner mitochondrial membrane with NADH-ubiquinone oxidoreductase (complex I, CI) and ubiquinol-cytochrome c oxidoreductase (cytochrome b-c1 complex, complex III, CIII), resulting in different assemblies (supercomplex SCI(1)III(2)IV(1) and megacomplex MCI(2)III(2)IV(2)).

It is found in the mitochondrion inner membrane. Its pathway is energy metabolism; oxidative phosphorylation. Component of the cytochrome c oxidase, the last enzyme in the mitochondrial electron transport chain which drives oxidative phosphorylation. The respiratory chain contains 3 multisubunit complexes succinate dehydrogenase (complex II, CII), ubiquinol-cytochrome c oxidoreductase (cytochrome b-c1 complex, complex III, CIII) and cytochrome c oxidase (complex IV, CIV), that cooperate to transfer electrons derived from NADH and succinate to molecular oxygen, creating an electrochemical gradient over the inner membrane that drives transmembrane transport and the ATP synthase. Cytochrome c oxidase is the component of the respiratory chain that catalyzes the reduction of oxygen to water. Electrons originating from reduced cytochrome c in the intermembrane space (IMS) are transferred via the dinuclear copper A center (CU(A)) of subunit 2 and heme A of subunit 1 to the active site in subunit 1, a binuclear center (BNC) formed by heme A3 and copper B (CU(B)). The BNC reduces molecular oxygen to 2 water molecules using 4 electrons from cytochrome c in the IMS and 4 protons from the mitochondrial matrix. In Homo sapiens (Human), this protein is Cytochrome c oxidase subunit 6B1 (COX6B1).